A 561-amino-acid chain; its full sequence is Putative transport protein YbjL (561 aa).

A run of 5 helical transmembrane segments spans residues 8-28, 32-52, 66-86, 94-114, and 158-178; these read LLNG…LCLG, LGSV…LLGQ, FMLF…SIFF, MLAL…GKLF, and NLSL…IVGA. RCK C-terminal domains follow at residues 200-288 and 292-373; these read RGLD…SLRN and VFDR…RIGF. The next 5 helical transmembrane spans lie at 383 to 403, 406 to 426, 447 to 467, 475 to 495, and 540 to 560; these read LLAF…TFQF, FSFG…LGFL, FGLM…ISNG, MLIA…LFGA, and AIAN…WPGL.

It belongs to the AAE transporter (TC 2.A.81) family. YbjL subfamily.

Its subcellular location is the cell membrane. In Salmonella gallinarum (strain 287/91 / NCTC 13346), this protein is Putative transport protein YbjL.